A 152-amino-acid polypeptide reads, in one-letter code: Small ribosomal subunit protein uS13 (152 aa).

Ser41 is subject to Phosphoserine.

Belongs to the universal ribosomal protein uS13 family.

It is found in the cytoplasm. Its function is as follows. Located at the top of the head of the 40S subunit, it contacts several helices of the 18S rRNA. The protein is Small ribosomal subunit protein uS13 (RpS18) of Drosophila melanogaster (Fruit fly).